The chain runs to 201 residues: Probable GTP-binding protein EngB (201 aa).

The EngB-type G domain occupies 23-196 (TGPEIALAGR…HEAVEEILSM (174 aa)). GTP contacts are provided by residues 31-38 (GRSNVGKS), 58-62 (GKTQM), 76-79 (DLPG), 143-146 (TKAD), and 175-177 (YSA). 2 residues coordinate Mg(2+): Ser-38 and Thr-60.

This sequence belongs to the TRAFAC class TrmE-Era-EngA-EngB-Septin-like GTPase superfamily. EngB GTPase family. The cofactor is Mg(2+).

Its function is as follows. Necessary for normal cell division and for the maintenance of normal septation. The protein is Probable GTP-binding protein EngB of Desulfitobacterium hafniense (strain DSM 10664 / DCB-2).